The following is a 62-amino-acid chain: Large ribosomal subunit protein uL30 (62 aa).

The protein belongs to the universal ribosomal protein uL30 family. Part of the 50S ribosomal subunit.

This is Large ribosomal subunit protein uL30 from Shouchella clausii (strain KSM-K16) (Alkalihalobacillus clausii).